Consider the following 33-residue polypeptide: Cysteine-rich venom protein (33 aa).

The disordered stretch occupies residues 1 to 33; it reads NVDFNSESTRRKKKQKEIVDLHNSLRRRVSPTA. Residues 24–33 are compositionally biased toward basic residues; sequence SLRRRVSPTA.

It belongs to the CRISP family. Contains 8 disulfide bonds. In terms of tissue distribution, expressed by the venom gland.

The protein resides in the secreted. In terms of biological role, blocks contraction of smooth muscle elicited by high potassium-induced depolarization, but does not block caffeine-stimulated contraction. May target voltage-gated calcium channels on smooth muscle (Cav). This is Cysteine-rich venom protein from Naja naja (Indian cobra).